A 295-amino-acid chain; its full sequence is Acetyl-coenzyme A carboxylase carboxyl transferase subunit beta (295 aa).

A disordered region spans residues 1 to 20 (MSWLSKLMPSGIRTENTPAK). Residues 28 to 295 (LWEKCSNCGS…QPHPQDADAA (268 aa)) enclose the CoA carboxyltransferase N-terminal domain. Zn(2+) contacts are provided by cysteine 32, cysteine 35, cysteine 51, and cysteine 54. The C4-type zinc-finger motif lies at 32-54 (CSNCGSALYGPELEENLEVCPKC).

This sequence belongs to the AccD/PCCB family. As to quaternary structure, acetyl-CoA carboxylase is a heterohexamer composed of biotin carboxyl carrier protein (AccB), biotin carboxylase (AccC) and two subunits each of ACCase subunit alpha (AccA) and ACCase subunit beta (AccD). Zn(2+) is required as a cofactor.

It localises to the cytoplasm. It catalyses the reaction N(6)-carboxybiotinyl-L-lysyl-[protein] + acetyl-CoA = N(6)-biotinyl-L-lysyl-[protein] + malonyl-CoA. It functions in the pathway lipid metabolism; malonyl-CoA biosynthesis; malonyl-CoA from acetyl-CoA: step 1/1. In terms of biological role, component of the acetyl coenzyme A carboxylase (ACC) complex. Biotin carboxylase (BC) catalyzes the carboxylation of biotin on its carrier protein (BCCP) and then the CO(2) group is transferred by the transcarboxylase to acetyl-CoA to form malonyl-CoA. The sequence is that of Acetyl-coenzyme A carboxylase carboxyl transferase subunit beta from Xanthomonas axonopodis pv. citri (strain 306).